The sequence spans 451 residues: MQRWVIHVDMDAFFASCEQLTRPTLRGRPVLVGGASGRGVVAGASYEARTFGARSAMPMYQAKALIGMRGVVVSPRFAVYRAASQRVFSILERMGGTVEKISIDEGFVEPPELYGASASEVDTWAQRLRAVIRDETGLPASVGGGAGKQVAKICSDLAKPDGIYLCAASEHEEKMYPLPVGRLWGVGPVTRTKLQQLGVETIGDLARMSEREIDISLGTTVGRSLWRLAQGHDDREVAPRAIAKQISVEHTYPKDLVTSRAVDTAIIRASRESHRRLLDDGRGARTVSVKLRMADFRIESRSATLPYATDNLDTVTATALKLARYPDEVGPIRLVGVGLSGLEDARQDILFPELDRVVPVKDTDFEVGVSDPHDSDLEISTTDESPTAIGWRATQDIWHPDYGHGWVQGLGHGKITVRFETRTTGPGKVRTFDTNDALLSSADPINSLDWS.

Positions 5–187 (VIHVDMDAFF…LPVGRLWGVG (183 aa)) constitute a UmuC domain. The Mg(2+) site is built by aspartate 9 and aspartate 104. Residue glutamate 105 is part of the active site.

This sequence belongs to the DNA polymerase type-Y family. As to quaternary structure, monomer. Mg(2+) is required as a cofactor.

Its subcellular location is the cytoplasm. The catalysed reaction is DNA(n) + a 2'-deoxyribonucleoside 5'-triphosphate = DNA(n+1) + diphosphate. Functionally, poorly processive, error-prone DNA polymerase involved in untargeted mutagenesis. Copies undamaged DNA at stalled replication forks, which arise in vivo from mismatched or misaligned primer ends. These misaligned primers can be extended by PolIV. Exhibits no 3'-5' exonuclease (proofreading) activity. May be involved in translesional synthesis, in conjunction with the beta clamp from PolIII. In Corynebacterium diphtheriae (strain ATCC 700971 / NCTC 13129 / Biotype gravis), this protein is DNA polymerase IV.